Consider the following 462-residue polypeptide: EPD1-interacting receptor-like cytoplasmic serine/threonine-protein kinase 5A (462 aa).

In terms of domain architecture, Protein kinase spans 85-366; that stretch reads FSSANFLGEG…DVVNILEPLL (282 aa). ATP-binding positions include 91–99 and K120; that span reads LGEGGFGPV. 2 positions are modified to phosphotyrosine: Y165 and Y167. D215 serves as the catalytic Proton acceptor.

The protein belongs to the protein kinase superfamily. Ser/Thr protein kinase family. Interacts with the Verticillium dahliae elicitor EPD1 (AC G2WWH6). In terms of processing, phosphorylated at Tyr-165 and Tyr-167 in the presence of pathogen-associated molecular patterns (PAMPs); this triggers the expression of pathogenesis-related genes (e.g. PR5 and PR16). As to expression, mostly expressed in roots and, to a lesser extent, in leaves.

Its subcellular location is the cell membrane. It carries out the reaction L-seryl-[protein] + ATP = O-phospho-L-seryl-[protein] + ADP + H(+). It catalyses the reaction L-threonyl-[protein] + ATP = O-phospho-L-threonyl-[protein] + ADP + H(+). In terms of biological role, required for pathogen-associated molecular pattern (PAMP, e.g. chitin and flg22)-triggered immunity (PTI) involving reactive oxygen species (ROS) accumulation and triggering plant defense, including defense-related gene expression (e.g. PR1 and LOX). Ensures specific recognition of the EPD1 effector of Verticillium dahliae, resulting in a hypersensitive response known as effector-triggered immunity (ETI), characterized by the activation of programmed cell death to limit infection by the pathogen. Priming plants with the incompatible pathogen V.dahliae leads to an increased resistance to compatible pathogens, as a result of systemic acquired resistance (SAR). The sequence is that of EPD1-interacting receptor-like cytoplasmic serine/threonine-protein kinase 5A from Gossypium barbadense (Sea Island cotton).